The following is a 328-amino-acid chain: Beta-ketoacyl-[acyl-carrier-protein] synthase III (328 aa).

Residues cysteine 122 and histidine 255 contribute to the active site. An ACP-binding region spans residues 256–260; that stretch reads QANIR. Asparagine 285 is an active-site residue.

Belongs to the thiolase-like superfamily. FabH family. As to quaternary structure, homodimer.

It is found in the cytoplasm. The catalysed reaction is malonyl-[ACP] + acetyl-CoA + H(+) = 3-oxobutanoyl-[ACP] + CO2 + CoA. It functions in the pathway lipid metabolism; fatty acid biosynthesis. Functionally, catalyzes the condensation reaction of fatty acid synthesis by the addition to an acyl acceptor of two carbons from malonyl-ACP. Catalyzes the first condensation reaction which initiates fatty acid synthesis and may therefore play a role in governing the total rate of fatty acid production. Possesses both acetoacetyl-ACP synthase and acetyl transacylase activities. Its substrate specificity determines the biosynthesis of branched-chain and/or straight-chain of fatty acids. The polypeptide is Beta-ketoacyl-[acyl-carrier-protein] synthase III (Polynucleobacter necessarius subsp. necessarius (strain STIR1)).